We begin with the raw amino-acid sequence, 396 residues long: Vitamin K-dependent protein Z (396 aa).

Residues 1 to 46 (AGSYLLEELFEGHLEKECWEEICVYEEAREVFEDDETTDEFWRTYM) enclose the Gla domain. 4-carboxyglutamate is present on residues E7, E8, E11, E15, E17, E20, E21, E26, E27, E30, E33, E36, and E40. Residues C18 and C23 are joined by a disulfide bond. EGF-like domains lie at 47-83 (GGSP…PNCA) and 85-126 (AESE…RSCL). 7 disulfides stabilise this stretch: C51–C62, C56–C71, C73–C82, C89–C101, C97–C110, C112–C125, and C169–C185. The O-linked (Glc...) serine glycan is linked to S53. The N-linked (GlcNAc...) asparagine glycan is linked to N59. D64 carries the post-translational modification (3R)-3-hydroxyaspartate. The Peptidase S1 domain occupies 135 to 357 (TLGPECCQRP…YALWLRQVTQ (223 aa)). N191 and N289 each carry an N-linked (GlcNAc...) asparagine glycan. C284 and C298 are oxidised to a cystine. Residues 356-396 (TQQPSRASPRGDRGQGRDGEPVPGDRGGRWAPTALPPGPLV) form a disordered region. Residues 364–375 (PRGDRGQGRDGE) are compositionally biased toward basic and acidic residues. O-linked (GalNAc...) threonine glycosylation occurs at T388.

This sequence belongs to the peptidase S1 family. In terms of processing, the iron and 2-oxoglutarate dependent 3-hydroxylation of aspartate and asparagine is (R) stereospecific within EGF domains. As to expression, plasma.

It localises to the secreted. Its function is as follows. Inhibits activity of the coagulation protease factor Xa in the presence of SERPINA10, calcium and phospholipids. Appears to assist hemostasis by binding thrombin and promoting its association with phospholipid vesicles. This Bos taurus (Bovine) protein is Vitamin K-dependent protein Z (PROZ).